Reading from the N-terminus, the 140-residue chain is MAIERTFSIIKPDATRRNLTGRINAVFEENGLRIVAQKRVQLSQAQAEAFYGVHRERPFFNDLVSFMISGPVVVQVLEGENAVARNRELMGATDPKKADAGTIRAQFAESIEANSVHGSDSAENAAIEIAYFFAGSEIVA.

Residues Lys11, Phe59, Arg87, Thr93, Arg104, and Asn114 each coordinate ATP. His117 serves as the catalytic Pros-phosphohistidine intermediate.

Belongs to the NDK family. As to quaternary structure, homotetramer. It depends on Mg(2+) as a cofactor.

The protein localises to the cytoplasm. It catalyses the reaction a 2'-deoxyribonucleoside 5'-diphosphate + ATP = a 2'-deoxyribonucleoside 5'-triphosphate + ADP. The enzyme catalyses a ribonucleoside 5'-diphosphate + ATP = a ribonucleoside 5'-triphosphate + ADP. Its function is as follows. Major role in the synthesis of nucleoside triphosphates other than ATP. The ATP gamma phosphate is transferred to the NDP beta phosphate via a ping-pong mechanism, using a phosphorylated active-site intermediate. This Granulibacter bethesdensis (strain ATCC BAA-1260 / CGDNIH1) protein is Nucleoside diphosphate kinase.